The primary structure comprises 159 residues: Allergen Arg r 1 (159 aa).

The signal sequence occupies residues 1–16; the sequence is MALIILLVACLSVVSA. 2 cysteine pairs are disulfide-bonded: Cys-50–Cys-155 and Cys-109–Cys-134.

Belongs to the calycin superfamily. Histamine-binding salivary protein family. Not glycosylated.

Its subcellular location is the secreted. This is Allergen Arg r 1 from Argas reflexus (European pigeon tick).